The chain runs to 520 residues: Cytosol aminopeptidase (520 aa).

Residues Leu200, Met201, Lys280, and Asp285 each contribute to the Zn(2+) site. Positions 280, 285, 290, and 292 each coordinate substrate. Asp285 contacts Mg(2+). The active site involves Lys292. Zn(2+)-binding residues include Arg301, Asp303, Asp362, and Glu364. Substrate contacts are provided by Asp303 and Asp362. Residues Asp362 and Glu364 each coordinate Mg(2+). Arg366 is a catalytic residue.

This sequence belongs to the peptidase M17 family. Homohexamer. It depends on Zn(2+) as a cofactor. The cofactor is Mn(2+).

It is found in the cytoplasm. It catalyses the reaction Release of an N-terminal amino acid, Xaa-|-Yaa-, in which Xaa is preferably Leu, but may be other amino acids including Pro although not Arg or Lys, and Yaa may be Pro. Amino acid amides and methyl esters are also readily hydrolyzed, but rates on arylamides are exceedingly low.. The catalysed reaction is an S-substituted L-cysteinylglycine + H2O = an S-substituted L-cysteine + glycine. It carries out the reaction L-cysteinylglycine + H2O = L-cysteine + glycine. The enzyme catalyses S-benzyl-L-cysteinylglycine + H2O = S-benzyl-L-cysteine + glycine. It catalyses the reaction Release of N-terminal proline from a peptide.. Its function is as follows. Cytosolic metallopeptidase that catalyzes the removal of unsubstituted N-terminal hydrophobic amino acids from various peptides. The presence of Zn(2+) ions is essential for the peptidase activity, and the association with other cofactors can modulate the substrate spectificity of the enzyme. For instance, in the presence of Mn(2+), it displays a specific Cys-Gly hydrolyzing activity of Cys-Gly-S-conjugates. Involved in the metabolism of glutathione and in the degradation of glutathione S-conjugates, which may play a role in the control of the cell redox status. This chain is Cytosol aminopeptidase (lap3), found in Xenopus tropicalis (Western clawed frog).